The chain runs to 1698 residues: MVGELRYREFRVPLGPGLHAYPDELIRQRVGHDGHPEYQIRWLILRRGDEGDGGSGQVDCKAEHILLWMSKDEIYANCHKMLGEDGQVIGPSQESAGEVGALDKSVLEEMETDVKSLIQRALRQLEECVGTIPPAPLLHTVHVLSAYASIEPLTGVFKDPRVLDLLMHMLSSPDYQIRWSAGRMIQALSSHDAGTRTQILLSLSQQEAIEKHLDFDSRCALLALFAQATLSEHPMSFEGIQLPQVPGRVLFSLVKRYLHVTSLLDQLNDSAAEPGAQNTSAPEELSGERGQLELEFSMAMGTLISELVQAMRWDQASDRPRSSARSPGSIFQPQLADVSPGLPAAQAQPSFRRSRRFRPRSEFASGNTYALYVRDTLQPGMRVRMLDDYEEISAGDEGEFRQSNNGVPPVQVFWESTGRTYWVHWHMLEILGFEEDIEDMVEADEYQGAVASRVLGRALPAWRWRPMTELYAVPYVLPEDEDTEECEHLTLAEWWELLFFIKKLDGPDHQEVLQILQENLDGEILDDEILAELAVPIELAQDLLLTLPQRLNDSALRDLINCHVYKKYGPEALAGNQAYPSLLEAQEDVLLLDAQAQAKDSEDAAKVEAKEPPSQSPNTPLQRLVEGYGPAGKILLDLEQALSSEGTQENKVKPLLLQLQRQPQPFLALMQSLDTPETNRTLHLTVLRILKQLVDFPEALLLPWHEAVDACMACLRSPNTDREVLQELIFFLHRLTSVSRDYAVVLNQLGARDAISKALEKHLGKLELAQELRDMVFKCEKHAHLYRKLITNILGGCIQMVLGQIEDHRRTHQPINIPFFDVFLRYLCQGSSVEVKEDKCWEKVEVSSNPHRASKLTDHNPKTYWESNGSAGSHYITLHMRRGILIRQLTLLVASEDSSYMPARVVVCGGDSTSSLHTELNSVNVMPSASRVILLENLTRFWPIIQIRIKRCQQGGIDTRIRGLEILGPKPTFWPVFREQLCRHTRLFYMVRAQAWSQDMAEDRRSLLHLSSRLNGALRQEQNFADRFLPDDEAAQALGKTCWEALVSPVVQNITSPDEDGISPLGWLLDQYLECQEAVFNPQSRGPAFFSRVRRLTHLLVHVEPCEAPPPVVATPRPKGRNRSHDWSSLATRGLPSSIMRNLTRCWRAVVEKQVNNFLTSSWRDDDFVPRYCEHFNILQNSSSELFGPRAAFLLALQNGCAGALLKLPFLKAAHVSEQFARHIDQQIQGSRIGGAQEMERLAQLQQCLQAVLIFSGLEIATTFEHYYQHYMADRLLGVVSSWLEGAVLEQIGPCFPNRLPQQMLQSLSTSKELQRQFHVYQLQQLDQELLKLEDTEKKIQVGLGASGKEHKSEKEEEAGAAAVVDVAEGEEEEEENEDLYYEGAMPEVSVLVLSRHSWPVASICHTLNPRTCLPSYLRGTLNRYSNFYNKSQSHPALERGSQRRLQWTWLGWAELQFGNQTLHVSTVQMWLLLYLNDLKAVSVESLLAFSGLSADMLNQAIGPLTSSRGPLDLHEQKDIPGGVLKIRDGSKEPRSRWDIVRLIPPQTYLQAEGEDGQNLEKRRNLLNCLIVRILKAHGDEGLHIDQLVCLVLEAWQKGPCPPRGLVSSLGKGSACSSTDVLSCILHLLGKGTLRRHDDRPQVLSYAVPVTVMEPHTESLNPGSSGPNPPLTFHTLQIRSRGVPYASCTATQSFSTFR.

The interval glutamine 315–phenylalanine 357 is disordered. The residue at position 339 (serine 339) is a Phosphoserine. One can recognise a CPH domain in the interval arginine 360–phenylalanine 433. The segment covering serine 601–glutamate 611 has biased composition (basic and acidic residues). The tract at residues serine 601–arginine 623 is disordered. A DOC domain is found at proline 814–alanine 993. A disordered region spans residues glycine 1345–glycine 1370. Residue lysine 1576 forms a Glycyl lysine isopeptide (Lys-Gly) (interchain with G-Cter in NEDD8) linkage.

Belongs to the cullin family. As to quaternary structure, component of the 3M complex, composed of core components CUL7, CCDC8 and OBSL1. Component of the Cul7-RING(FBXW8) complex consisting of CUL7, RBX1, SKP1 and FBXW8. Within the Cul7-RING(FBXW8) complex interacts with FBXW8 and RBX1, but not with SKP1. Interacts with CUL1 (via the C-terminal domain); the interaction seems to be mediated by FBXW8; it is likely specific to FBXW8, but not other F-box proteins. Interacts (via the CPH domain) with p53/TP53; the interaction preferentially involves tetrameric and dimeric p53/TP53; this interaction recruits p53/TP53 for ubiquitination by neddylated CUL1-RBX1. The CUL7-CUL9 heterodimer seems to interact specifically with p53/TP53. Interacts with FBXW8; interaction is mutually exclusive of binding to CUL9 or p53/TP53. Interacts with CUL9; leading to inhibited CUL9 activity. Interacts with OBSL1. Interacts (as part of the 3M complex) with HDAC4 and HDAC5; it is negatively regulated by ANKRA2. In terms of assembly, (Microbial infection) Interacts with SV40 Large T antigen; this interaction seems to inhibit CUL7. In terms of processing, according to a report, may not be neddylated despite the conserved consensus site for neddylation at Lys-1576. Structural study of the Cul7-RING(FBXW8) reveals that both CUL7 and RBX1 are in orientations that are incompatible with neddylation. Highly expressed in fetal kidney and adult skeletal muscle. Also abundant in fetal brain, as well as in adult pancreas, kidney, placenta and heart. Detected in trophoblasts, lymphoblasts, osteoblasts, chondrocytes and skin fibroblasts.

The protein localises to the cytoplasm. It is found in the cytoskeleton. Its subcellular location is the microtubule organizing center. The protein resides in the centrosome. It localises to the perinuclear region. The protein localises to the golgi apparatus. Its pathway is protein modification; protein ubiquitination. In terms of biological role, core component of the 3M and Cul7-RING(FBXW8) complexes, which mediate the ubiquitination and subsequent proteasomal degradation of target proteins. Core component of the 3M complex, a complex required to regulate microtubule dynamics and genome integrity. It is unclear how the 3M complex regulates microtubules, it could act by controlling the level of a microtubule stabilizer. The Cul7-RING(FBXW8) complex alone lacks ubiquitination activity and does not promote polyubiquitination and proteasomal degradation of p53/TP53. However it mediates recruitment of p53/TP53 for ubiquitination by neddylated CUL1-RBX1. Interaction with CUL9 is required to inhibit CUL9 activity and ubiquitination of BIRC5. The Cul7-RING(FBXW8) complex also mediates ubiquitination and consequent degradation of target proteins such as GORASP1, IRS1 and MAP4K1/HPK1. Ubiquitination of GORASP1 regulates Golgi morphogenesis and dendrite patterning in brain. Mediates ubiquitination and degradation of IRS1 in a mTOR-dependent manner: the Cul7-RING(FBXW8) complex recognizes and binds IRS1 previously phosphorylated by S6 kinase (RPS6KB1 or RPS6KB2). The Cul7-RING(FBXW8) complex also mediates ubiquitination of MAP4K1/HPK1: recognizes and binds autophosphorylated MAP4K1/HPK1, leading to its degradation, thereby affecting cell proliferation and differentiation. Acts as a regulator in trophoblast cell epithelial-mesenchymal transition and placental development. While the Cul7-RING(FBXW8) and the 3M complexes are associated and involved in common processes, CUL7 and the Cul7-RING(FBXW8) complex may have additional functions. Probably plays a role in the degradation of proteins involved in endothelial proliferation and/or differentiation. This chain is Cullin-7 (CUL7), found in Homo sapiens (Human).